We begin with the raw amino-acid sequence, 1394 residues long: Kinesin-like protein KIF27 (1394 aa).

The region spanning 5–341 is the Kinesin motor domain; it reads PIKVAVRIRP…LKYANRARNI (337 aa). ATP is bound at residue 84–91; that stretch reads GQTGSGKT. 2 coiled-coil regions span residues 352 to 418 and 493 to 554; these read QADR…IEQA and QVVF…ELAK. Disordered stretches follow at residues 551 to 583 and 642 to 664; these read ELAK…PHTA and FSDN…SRSH. Residues 555–565 are compositionally biased toward polar residues; that stretch reads RSSSMPTSTKE. Residues 571–580 are compositionally biased toward basic and acidic residues; that stretch reads PDARAPEKRP. Serine 643, serine 646, serine 672, serine 675, and serine 704 each carry phosphoserine. The stretch at 709 to 980 forms a coiled coil; sequence LQKLRTSELI…NKKLRSSQAL (272 aa). A Phosphoserine modification is found at serine 999. Coiled-coil stretches lie at residues 1010–1078, 1118–1152, and 1187–1226; these read TEEK…SIQN, NKVI…HELE, and QDGE…RLKD. A compositionally biased stretch (basic and acidic residues) spans 1267 to 1280; that stretch reads TENTKLNGREKEVD. The interval 1267 to 1340 is disordered; the sequence is TENTKLNGRE…SQSPPPPQLQ (74 aa). 2 stretches are compositionally biased toward polar residues: residues 1281-1295 and 1310-1320; these read NSSS…TQQI and APSSGQLQSSA. Phosphoserine occurs at positions 1365 and 1387. The tract at residues 1375-1394 is disordered; that stretch reads SLGAGVRSVTADSLEEPEES.

It belongs to the TRAFAC class myosin-kinesin ATPase superfamily. Kinesin family. KIF27 subfamily. As to quaternary structure, interacts with STK36.

The protein resides in the cytoplasm. It localises to the cytoskeleton. Its subcellular location is the cell projection. The protein localises to the cilium. In terms of biological role, plays an essential role in motile ciliogenesis. The sequence is that of Kinesin-like protein KIF27 (Kif27) from Rattus norvegicus (Rat).